The following is a 465-amino-acid chain: Fujikurins efflux protein FFUJ_12242 (465 aa).

Residues 1-66 are disordered; sequence MATNVGGAVD…AAKAHDEGPP (66 aa). Over residues 11 to 28 the composition is skewed to basic and acidic residues; the sequence is NSRRSISDNRHDPEKPAE. Transmembrane regions (helical) follow at residues 70–90, 115–135, 142–162, 175–195, 200–220, 231–251, and 274–294; these read TAAW…PGWI, WIPS…GIIF, PLII…SLAK, SAIG…TWFL, AAMG…PIMI, WALR…CLTV, and PAFA…YIPI. N-linked (GlcNAc...) asparagine glycosylation occurs at asparagine 310. The next 5 helical transmembrane spans lie at 314–334, 342–362, 368–388, 404–424, and 430–450; these read YLVA…GYGA, MFII…IPAT, IGYA…VGAL, IVFL…GAIL, and GWVS…AIIL.

It belongs to the major facilitator superfamily. Monocarboxylate porter (TC 2.A.1.13) family.

The protein localises to the cell membrane. In terms of biological role, efflux pump that may be involved in the secretion of fujikurins. This chain is Fujikurins efflux protein FFUJ_12242, found in Gibberella fujikuroi (strain CBS 195.34 / IMI 58289 / NRRL A-6831) (Bakanae and foot rot disease fungus).